We begin with the raw amino-acid sequence, 109 residues long: Parvalbumin beta (109 aa).

At Ala-2 the chain carries N-acetylalanine. An igE-binding region spans residues 22 to 41 (AGSFDHKKFFKACGLSGKST). 2 consecutive EF-hand domains span residues 39–74 (KSTDEVKKAFAIIDQDKSGFIEEEELKLFLQNFKAG) and 78–109 (LSDAETKAFLKAGDSDGDGKIGIDEFAAMIKG). Ca(2+)-binding residues include Asp-52, Asp-54, Ser-56, Phe-58, Glu-60, Glu-63, Asp-91, Asp-93, Asp-95, Lys-97, and Glu-102.

This sequence belongs to the parvalbumin family. In terms of processing, the N-terminus is blocked. In terms of tissue distribution, expressed in both white and dark muscles (at protein level). About eight and a half times lower expression in the dark muscle than in the white muscle (at protein level).

Its function is as follows. In muscle, parvalbumin is thought to be involved in relaxation after contraction. It binds two calcium ions. The protein is Parvalbumin beta of Scomber japonicus (Chub mackerel).